The sequence spans 342 residues: S-adenosylmethionine:tRNA ribosyltransferase-isomerase (342 aa).

The protein belongs to the QueA family. As to quaternary structure, monomer.

It is found in the cytoplasm. It catalyses the reaction 7-aminomethyl-7-carbaguanosine(34) in tRNA + S-adenosyl-L-methionine = epoxyqueuosine(34) in tRNA + adenine + L-methionine + 2 H(+). It participates in tRNA modification; tRNA-queuosine biosynthesis. Transfers and isomerizes the ribose moiety from AdoMet to the 7-aminomethyl group of 7-deazaguanine (preQ1-tRNA) to give epoxyqueuosine (oQ-tRNA). The sequence is that of S-adenosylmethionine:tRNA ribosyltransferase-isomerase from Streptococcus pyogenes serotype M3 (strain ATCC BAA-595 / MGAS315).